Reading from the N-terminus, the 82-residue chain is Immediate early response 3-interacting protein 1 (82 aa).

Helical transmembrane passes span 2–22 (AFTL…IAVL) and 62–82 (VMRV…LLFG).

Belongs to the YOS1 family.

The protein resides in the endoplasmic reticulum membrane. Functionally, regulator of endoplasmic reticulum secretion that acts as a key determinant of brain size. Required for secretion of extracellular matrix proteins. Required for correct brain development by depositing sufficient extracellular matrix proteins for tissue integrity and the proliferation of neural progenitors. Acts as a regulator of the unfolded protein response (UPR). This Danio rerio (Zebrafish) protein is Immediate early response 3-interacting protein 1.